Here is a 504-residue protein sequence, read N- to C-terminus: Lysine--tRNA ligase (504 aa).

Residues Glu-411 and Glu-418 each contribute to the Mg(2+) site.

It belongs to the class-II aminoacyl-tRNA synthetase family. Homodimer. Mg(2+) is required as a cofactor.

It is found in the cytoplasm. The catalysed reaction is tRNA(Lys) + L-lysine + ATP = L-lysyl-tRNA(Lys) + AMP + diphosphate. This Clostridium botulinum (strain ATCC 19397 / Type A) protein is Lysine--tRNA ligase.